A 460-amino-acid chain; its full sequence is Cysteine--tRNA ligase (460 aa).

Cys28 is a binding site for Zn(2+). Positions 30 to 40 (MTVYDYCHLGH) match the 'HIGH' region motif. 3 residues coordinate Zn(2+): Cys209, His234, and Glu238. The 'KMSKS' region signature appears at 266–270 (KMSKS). ATP is bound at residue Lys269.

The protein belongs to the class-I aminoacyl-tRNA synthetase family. In terms of assembly, monomer. Requires Zn(2+) as cofactor.

The protein resides in the cytoplasm. The enzyme catalyses tRNA(Cys) + L-cysteine + ATP = L-cysteinyl-tRNA(Cys) + AMP + diphosphate. This is Cysteine--tRNA ligase from Pseudomonas entomophila (strain L48).